Consider the following 585-residue polypeptide: Involucrin (585 aa).

Over residues 1-15 the composition is skewed to polar residues; the sequence is MSQQHTLPVTLSPAL. A disordered region spans residues 1–132; that stretch reads MSQQHTLPVT…LEEEKKLLDQ (132 aa). Gln79 carries the Omega-hydroxyceramide glutamate ester lipid modification. The span at 92-115 shows a compositional bias: basic and acidic residues; that stretch reads WEQHEEYQKAENPEQQLKQEKTQR. Omega-hydroxyceramide glutamate ester attachment occurs at residues Gln118 and Gln133. The tract at residues 149–540 is disordered; it reads KEQLLELPEQ…KDLEQQKGQL (392 aa). Tandem repeats lie at residues 153 to 162, 163 to 172, 173 to 182, 183 to 192, 193 to 202, 203 to 212, 213 to 222, 223 to 232, 233 to 242, 243 to 252, 253 to 262, 263 to 272, 273 to 282, 283 to 292, 293 to 302, 303 to 312, 313 to 322, 323 to 332, 333 to 342, 343 to 352, 353 to 362, 363 to 372, and 373 to 382. Residues 153 to 542 are 39 X 10 AA approximate tandem repeats of [LP]-[EKG]-[LHVYQEK]-[PLSQE]-[EQDV]-[QHEKRGA]-Q-[EMVQLP]-[GKLE]-[QHVNLD]; it reads LELPEQQEGH…LEQQKGQLEQ (390 aa). Residues 159 to 178 are compositionally biased toward basic and acidic residues; the sequence is QEGHLKHLEQQEGQLKHPEQ. Low complexity predominate over residues 179-261; sequence QEGQLELPEQ…QLELSEQQEG (83 aa). The span at 262–271 shows a compositional bias: basic and acidic residues; that stretch reads QLKHLEHQEG. Composition is skewed to basic and acidic residues over residues 292-304, 314-328, and 341-360; these read QLKHLDQQEKQPE, KHLEQQEGQPKHLEQ, and GQLKHLEQQEGQLEHLEHQE. A compositionally biased stretch (low complexity) spans 361–383; it reads GQLGLPEQQVLQLKQLEKQQGQP. Residues 383 to 392 form a 24; approximate repeat; sequence PKHLEEEEGQ. Over residues 384–393 the composition is skewed to basic and acidic residues; it reads KHLEEEEGQL. A run of 11 repeats spans residues 393–402, 403–412, 413–422, 423–432, 433–442, 443–452, 453–462, 463–472, 473–482, 483–492, and 493–502. Composition is skewed to basic and acidic residues over residues 415 to 424 and 431 to 444; these read QQERQVEHLE and KHLEEQEGQLKHLE. Over residues 445-462 the composition is skewed to low complexity; that stretch reads QQQGQLEVPEQQVGQPKN. Over residues 479–488 the composition is skewed to basic and acidic residues; that stretch reads QVKHLEKQEA. Gln496 is covalently cross-linked (Isoglutamyl lysine isopeptide (Gln-Lys) (interchain with K-? in other proteins)). Residues 501-535 are compositionally biased toward basic and acidic residues; the sequence is KHLEQQEKHLEHPEQQDGQLKHLEQQEGQLKDLEQ. The 36; approximate repeat unit spans residues 503 to 512; the sequence is LEQQEKHLEH. 2 repeat units span residues 513 to 522 and 523 to 532. One copy of the 39; approximate repeat lies at 533–542; it reads LEQQKGQLEQ.

The protein belongs to the involucrin family. In terms of assembly, directly or indirectly cross-linked to cornifelin (CNFN). In terms of processing, substrate of transglutaminase. Some glutamines and lysines are cross-linked to other involucrin molecules, to other proteins such as keratin, desmoplakin, periplakin and envoplakin, and to lipids like omega-hydroxyceramide. Keratinocytes of epidermis and other stratified squamous epithelia.

It is found in the cytoplasm. Part of the insoluble cornified cell envelope (CE) of stratified squamous epithelia. This chain is Involucrin (IVL), found in Homo sapiens (Human).